The following is a 506-amino-acid chain: 2,3-bisphosphoglycerate-independent phosphoglycerate mutase (506 aa).

Asp-9 and Ser-59 together coordinate Mn(2+). Ser-59 functions as the Phosphoserine intermediate in the catalytic mechanism. Substrate is bound by residues His-120, Arg-149–Asp-150, Arg-181, Arg-187, Arg-254–Arg-257, and Lys-327. Asp-394, His-398, Asp-435, His-436, and His-452 together coordinate Mn(2+).

The protein belongs to the BPG-independent phosphoglycerate mutase family. Requires Mn(2+) as cofactor.

The catalysed reaction is (2R)-2-phosphoglycerate = (2R)-3-phosphoglycerate. It participates in carbohydrate degradation; glycolysis; pyruvate from D-glyceraldehyde 3-phosphate: step 3/5. In terms of biological role, catalyzes the interconversion of 2-phosphoglycerate and 3-phosphoglycerate. This chain is 2,3-bisphosphoglycerate-independent phosphoglycerate mutase, found in Natronomonas pharaonis (strain ATCC 35678 / DSM 2160 / CIP 103997 / JCM 8858 / NBRC 14720 / NCIMB 2260 / Gabara) (Halobacterium pharaonis).